A 253-amino-acid polypeptide reads, in one-letter code: Triosephosphate isomerase (253 aa).

Residue N9 to K11 coordinates substrate. Catalysis depends on H97, which acts as the Electrophile. Residue E169 is the Proton acceptor of the active site. Residues G175, S215, and G236–G237 each bind substrate.

Belongs to the triosephosphate isomerase family. In terms of assembly, homodimer.

The protein resides in the cytoplasm. The enzyme catalyses D-glyceraldehyde 3-phosphate = dihydroxyacetone phosphate. Its pathway is carbohydrate biosynthesis; gluconeogenesis. The protein operates within carbohydrate degradation; glycolysis; D-glyceraldehyde 3-phosphate from glycerone phosphate: step 1/1. Functionally, involved in the gluconeogenesis. Catalyzes stereospecifically the conversion of dihydroxyacetone phosphate (DHAP) to D-glyceraldehyde-3-phosphate (G3P). This is Triosephosphate isomerase from Staphylococcus saprophyticus subsp. saprophyticus (strain ATCC 15305 / DSM 20229 / NCIMB 8711 / NCTC 7292 / S-41).